Here is a 452-residue protein sequence, read N- to C-terminus: Methionine aminopeptidase 2 (452 aa).

The segment at 1 to 96 (MAVQALPEIN…VPLSTLFPNN (96 aa)) is disordered. Residues 18–35 (GAANAAAKGQAAQGTAGN) are compositionally biased toward low complexity. Positions 36-53 (DDAENDESDEDKEDEQEV) are enriched in acidic residues. A compositionally biased stretch (basic residues) spans 62 to 77 (GKKKKKKTKKKKKKGT). Histidine 202 contacts substrate. Aspartate 222, aspartate 233, and histidine 302 together coordinate a divalent metal cation. Histidine 310 serves as a coordination point for substrate. A divalent metal cation-binding residues include glutamate 338 and glutamate 433.

The protein belongs to the peptidase M24A family. Methionine aminopeptidase eukaryotic type 2 subfamily. It depends on Co(2+) as a cofactor. Zn(2+) is required as a cofactor. Mn(2+) serves as cofactor. The cofactor is Fe(2+).

The protein localises to the cytoplasm. It carries out the reaction Release of N-terminal amino acids, preferentially methionine, from peptides and arylamides.. Its function is as follows. Cotranslationally removes the N-terminal methionine from nascent proteins. The N-terminal methionine is often cleaved when the second residue in the primary sequence is small and uncharged (Met-Ala-, Cys, Gly, Pro, Ser, Thr, or Val). The polypeptide is Methionine aminopeptidase 2 (Coccidioides posadasii (strain C735) (Valley fever fungus)).